The following is a 160-amino-acid chain: Cytochrome b6-f complex subunit 4 (160 aa).

Transmembrane regions (helical) follow at residues 36 to 56 (ILYM…GLAI), 95 to 115 (LLGI…PFIE), and 127 to 147 (PIAM…GAGA).

This sequence belongs to the cytochrome b family. PetD subfamily. As to quaternary structure, the 4 large subunits of the cytochrome b6-f complex are cytochrome b6, subunit IV (17 kDa polypeptide, PetD), cytochrome f and the Rieske protein, while the 4 small subunits are PetG, PetL, PetM and PetN. The complex functions as a dimer.

It is found in the cellular thylakoid membrane. Its function is as follows. Component of the cytochrome b6-f complex, which mediates electron transfer between photosystem II (PSII) and photosystem I (PSI), cyclic electron flow around PSI, and state transitions. The protein is Cytochrome b6-f complex subunit 4 of Synechocystis sp. (strain ATCC 27184 / PCC 6803 / Kazusa).